Consider the following 327-residue polypeptide: Phenylalanine--tRNA ligase alpha subunit (327 aa).

E252 serves as a coordination point for Mg(2+).

This sequence belongs to the class-II aminoacyl-tRNA synthetase family. Phe-tRNA synthetase alpha subunit type 1 subfamily. As to quaternary structure, tetramer of two alpha and two beta subunits. Requires Mg(2+) as cofactor.

It localises to the cytoplasm. It carries out the reaction tRNA(Phe) + L-phenylalanine + ATP = L-phenylalanyl-tRNA(Phe) + AMP + diphosphate + H(+). The protein is Phenylalanine--tRNA ligase alpha subunit of Photobacterium profundum (strain SS9).